The sequence spans 87 residues: HssA/B-like protein 31 (87 aa).

This sequence belongs to the hssA/B family.

In Dictyostelium discoideum (Social amoeba), this protein is HssA/B-like protein 31 (hssl31).